Reading from the N-terminus, the 1301-residue chain is DNA-directed RNA polymerase subunit beta (1301 aa).

The protein belongs to the RNA polymerase beta chain family. In terms of assembly, in plastids the minimal PEP RNA polymerase catalytic core is composed of four subunits: alpha, beta, beta', and beta''. When a (nuclear-encoded) sigma factor is associated with the core the holoenzyme is formed, which can initiate transcription.

It localises to the plastid. The protein resides in the chloroplast. The catalysed reaction is RNA(n) + a ribonucleoside 5'-triphosphate = RNA(n+1) + diphosphate. In terms of biological role, DNA-dependent RNA polymerase catalyzes the transcription of DNA into RNA using the four ribonucleoside triphosphates as substrates. The polypeptide is DNA-directed RNA polymerase subunit beta (Chlorella vulgaris (Green alga)).